Reading from the N-terminus, the 351-residue chain is Small ribosomal subunit biogenesis GTPase RsgA (351 aa).

The CP-type G domain occupies 107–277 (ENLLQRPDNF…LIDSPGIREF (171 aa)). Residues 163–166 (NKTD) and 219–227 (GQSGVGKSS) contribute to the GTP site. Zn(2+) contacts are provided by Cys-301, Cys-306, His-308, and Cys-314.

Belongs to the TRAFAC class YlqF/YawG GTPase family. RsgA subfamily. Monomer. Associates with 30S ribosomal subunit, binds 16S rRNA. Zn(2+) is required as a cofactor.

The protein localises to the cytoplasm. Functionally, one of several proteins that assist in the late maturation steps of the functional core of the 30S ribosomal subunit. Helps release RbfA from mature subunits. May play a role in the assembly of ribosomal proteins into the subunit. Circularly permuted GTPase that catalyzes slow GTP hydrolysis, GTPase activity is stimulated by the 30S ribosomal subunit. The polypeptide is Small ribosomal subunit biogenesis GTPase RsgA (Marinobacter nauticus (strain ATCC 700491 / DSM 11845 / VT8) (Marinobacter aquaeolei)).